The sequence spans 283 residues: MTKEPRFKILITNDDGIKAKGISLLVSLLRDANFADLYVVAPLEEQSGRSMAFSLIGPTAVEPFDYPQKVQEAWAVVGTPVDCVKLAIGELFKDNPPDLVLSGINNGKNSGRNLYYSATVGAIREANLHGIPAIALSQCENISFFQEAQMSSLIRALCEFTVSHKHANPLGFNVTFPASSDNSPWKGIRFTLSGDEFLFGIPRLIRTEGNRRYYTLYDMQDKVSEDLSDEYLALANNYITAVPLISKNTPLATLSEEELAFLKESFEQSVQWDSSLNFEEDLA.

4 residues coordinate a divalent metal cation: aspartate 14, aspartate 15, serine 47, and asparagine 105.

Belongs to the SurE nucleotidase family. It depends on a divalent metal cation as a cofactor.

It is found in the cytoplasm. The catalysed reaction is a ribonucleoside 5'-phosphate + H2O = a ribonucleoside + phosphate. Its function is as follows. Nucleotidase that shows phosphatase activity on nucleoside 5'-monophosphates. This Chlamydia muridarum (strain MoPn / Nigg) protein is 5'-nucleotidase SurE.